Consider the following 261-residue polypeptide: Carbonic anhydrase 1 (261 aa).

Position 2 is an N-acetylalanine (A2). The Alpha-carbonic anhydrase domain maps to 4-261; sequence PDWGYDGENG…LNGRTVKASF (258 aa). H65 acts as the Proton donor/acceptor in catalysis. Zn(2+) contacts are provided by H95, H97, and H120. Residues T200 and 200–201 contribute to the substrate site; that span reads TH.

It belongs to the alpha-carbonic anhydrase family. The cofactor is Zn(2+).

It is found in the cytoplasm. It catalyses the reaction hydrogencarbonate + H(+) = CO2 + H2O. It carries out the reaction urea = cyanamide + H2O. Inhibited by acetazolamide. Catalyzes the reversible hydration of carbon dioxide. Can hydrate cyanamide to urea. The sequence is that of Carbonic anhydrase 1 (CA1) from Bos taurus (Bovine).